A 185-amino-acid chain; its full sequence is Peptidyl-tRNA hydrolase (185 aa).

Tyrosine 14 lines the tRNA pocket. Histidine 19 (proton acceptor) is an active-site residue. Residues tyrosine 64, asparagine 66, and asparagine 112 each contribute to the tRNA site.

It belongs to the PTH family. Monomer.

It is found in the cytoplasm. The enzyme catalyses an N-acyl-L-alpha-aminoacyl-tRNA + H2O = an N-acyl-L-amino acid + a tRNA + H(+). Functionally, hydrolyzes ribosome-free peptidyl-tRNAs (with 1 or more amino acids incorporated), which drop off the ribosome during protein synthesis, or as a result of ribosome stalling. Catalyzes the release of premature peptidyl moieties from peptidyl-tRNA molecules trapped in stalled 50S ribosomal subunits, and thus maintains levels of free tRNAs and 50S ribosomes. This is Peptidyl-tRNA hydrolase from Ligilactobacillus salivarius (strain UCC118) (Lactobacillus salivarius).